The primary structure comprises 715 residues: uncharacterized protein (715 aa).

Disordered regions lie at residues 192–216, 300–348, 461–481, and 580–630; these read ASSV…SVTA, NEEV…TSKR, ASSS…RSNE, and FTVS…KPPK. Residues 202 to 213 show a composition bias toward low complexity; the sequence is NNTSPYPPSNSS. 2 stretches are compositionally biased toward polar residues: residues 301–326 and 472–481; these read EEVS…NKND and HLGTSLRSNE. The span at 601-614 shows a compositional bias: low complexity; that stretch reads TDSSPSDTISSSPT.

This is an uncharacterized protein from Schizosaccharomyces pombe (strain 972 / ATCC 24843) (Fission yeast).